A 206-amino-acid chain; its full sequence is MKPFTVLNGIAALLDRPNVDTDQIIPKQFLRKIERTGFGVHLFHDWRYLDDAGTKLNPEFSLNQERYKGASILLTRDNFGCGSSREHAPWALEDYGFRSIIAPSYADIFFNNCFKNGMLPVVLKSEEVEELFRFVSGNVGAKLQIDLDKQTVTGPTGKVYTFEVDSFRKYCLYNGLDDIGLTLKQGSKIGEFEKKQKEVEPWLYVI.

The protein belongs to the LeuD family. LeuD type 1 subfamily. In terms of assembly, heterodimer of LeuC and LeuD.

It carries out the reaction (2R,3S)-3-isopropylmalate = (2S)-2-isopropylmalate. Its pathway is amino-acid biosynthesis; L-leucine biosynthesis; L-leucine from 3-methyl-2-oxobutanoate: step 2/4. Catalyzes the isomerization between 2-isopropylmalate and 3-isopropylmalate, via the formation of 2-isopropylmaleate. The protein is 3-isopropylmalate dehydratase small subunit of Leptospira borgpetersenii serovar Hardjo-bovis (strain JB197).